The primary structure comprises 414 residues: Esterase FrsA (414 aa).

Belongs to the FrsA family.

It carries out the reaction a carboxylic ester + H2O = an alcohol + a carboxylate + H(+). In terms of biological role, catalyzes the hydrolysis of esters. This chain is Esterase FrsA, found in Klebsiella pneumoniae (strain 342).